Consider the following 124-residue polypeptide: Fluoride-specific ion channel FluC 2 (124 aa).

4 consecutive transmembrane segments (helical) span residues 1 to 21, 36 to 58, 63 to 85, and 104 to 124; these read MNFL…YAIT, SNLP…FIFG, VFIY…TMNT, and LSSY…AILF. Na(+) contacts are provided by G75 and T78.

The protein belongs to the fluoride channel Fluc/FEX (TC 1.A.43) family. As to quaternary structure, heterodimer composed of FluC1 and FluC2. Neither FluC1 nor FluC2 alone catalyzes fluoride efflux from liposomes.

It localises to the cell membrane. The catalysed reaction is fluoride(in) = fluoride(out). Na(+) is not transported, but it plays an essential structural role and its presence is essential for fluoride channel function. Fluoride-specific ion channel. Important for reducing fluoride concentration in the cell, thus reducing its toxicity. In Lactobacillus acidophilus (strain ATCC 700396 / NCK56 / N2 / NCFM), this protein is Fluoride-specific ion channel FluC 2.